The primary structure comprises 436 residues: Suppressor of cytokine signaling 4 (436 aa).

A disordered region spans residues 1-25 (MAENNSKNVDVRPKTSRSRSADRKD). Over residues 9–25 (VDVRPKTSRSRSADRKD) the composition is skewed to basic and acidic residues. The 96-residue stretch at 283-378 (CYWGVMDKYA…FFEPLLSTPL (96 aa)) folds into the SH2 domain. An SOCS box domain is found at 373–422 (LLSTPLIRTFPFSLQHICRTVICNCTTYDGIDALPIPSPMKLYLKEYHYK).

It participates in protein modification; protein ubiquitination. SOCS family proteins form part of a classical negative feedback system that regulates cytokine signal transduction. Substrate-recognition component of a SCF-like ECS (Elongin BC-CUL2/5-SOCS-box protein) E3 ubiquitin-protein ligase complex which mediates the ubiquitination and subsequent proteasomal degradation of target proteins. Inhibits EGF signaling by mediating the degradation of the Tyr-phosphorylated EGF receptor/EGFR. The sequence is that of Suppressor of cytokine signaling 4 (Socs4) from Mus musculus (Mouse).